Consider the following 288-residue polypeptide: Undecaprenyl-diphosphatase (288 aa).

The next 8 membrane-spanning stretches (helical) occupy residues 11 to 31 (LDLW…FLPI), 49 to 69 (PGVA…LSYF), 94 to 114 (AQMG…GLLI), 129 to 149 (LAAI…AEQL), 159 to 179 (LRLA…IPGV), 199 to 219 (AARF…LVEL), 234 to 254 (VLAI…AWLL), and 265 to 285 (FVVY…TGTL).

Belongs to the UppP family.

It localises to the cell inner membrane. It carries out the reaction di-trans,octa-cis-undecaprenyl diphosphate + H2O = di-trans,octa-cis-undecaprenyl phosphate + phosphate + H(+). In terms of biological role, catalyzes the dephosphorylation of undecaprenyl diphosphate (UPP). Confers resistance to bacitracin. This is Undecaprenyl-diphosphatase from Synechococcus elongatus (strain ATCC 33912 / PCC 7942 / FACHB-805) (Anacystis nidulans R2).